The chain runs to 608 residues: Albumin (608 aa).

The signal sequence occupies residues M1 to S18. Positions R19–R24 are excised as a propeptide. Albumin domains lie at R19–E211, K212–P403, and L404–A601. H27 provides a ligand contact to Cu cation. Residue S29 is modified to Phosphoserine. 2 residues coordinate Ca(2+): E30 and D37. An intrachain disulfide couples C77 to C86. Phosphoserine occurs at positions 82 and 89. Position 91 (H91) interacts with Zn(2+). 6 cysteine pairs are disulfide-bonded: C99-C115, C114-C125, C148-C193, C192-C201, C224-C270, and C269-C277. E268 contacts Ca(2+). Zn(2+) contacts are provided by H271 and D273. Ca(2+)-binding residues include D273, E276, and D279. Intrachain disulfides connect C289-C303, C302-C313, C340-C385, C384-C393, C416-C462, C461-C472, C485-C501, and C500-C511. S297 bears the Phosphoserine mark. The residue at position 443 (S443) is a Phosphoserine. 2 positions are modified to phosphothreonine: T444 and T446. The residue at position 460 (K460) is an N6-succinyllysine. A Phosphoserine modification is found at S513. Intrachain disulfides connect C538/C583 and C582/C591. Residue K543 is modified to N6-succinyllysine. Position 558 is an N6-methyllysine (K558). Phosphothreonine is present on T570. Position 588 is an N6-succinyllysine (K588).

This sequence belongs to the ALB/AFP/VDB family. As to quaternary structure, interacts with FCGRT; this interaction regulates ALB homeostasis. Interacts with TASOR. In plasma, occurs in a covalently-linked complex with chromophore-bound alpha-1-microglobulin; this interaction does not prevent fatty acid binding to ALB. Plasma.

It localises to the secreted. In terms of biological role, binds water, Ca(2+), Na(+), K(+), fatty acids, hormones, bilirubin and drugs. Its main function is the regulation of the colloidal osmotic pressure of blood. Major zinc transporter in plasma, typically binds about 80% of all plasma zinc. Major calcium and magnesium transporter in plasma, binds approximately 45% of circulating calcium and magnesium in plasma. Potentially has more than two calcium-binding sites and might additionally bind calcium in a non-specific manner. The shared binding site between zinc and calcium at residue Asp-273 suggests a crosstalk between zinc and calcium transport in the blood. The rank order of affinity is zinc &gt; calcium &gt; magnesium. Binds to the bacterial siderophore enterobactin and inhibits enterobactin-mediated iron uptake of E.coli from ferric transferrin, and may thereby limit the utilization of iron and growth of enteric bacteria such as E.coli. Does not prevent iron uptake by the bacterial siderophore aerobactin. The protein is Albumin of Mesocricetus auratus (Golden hamster).